A 694-amino-acid chain; its full sequence is Nucleolin (694 aa).

Residues Met1 to Pro277 are disordered. Residues Glu26–Gly40 show a composition bias toward acidic residues. Over residues Pro46–Gly108 the composition is skewed to low complexity. Tandem repeats lie at residues Val55 to Ala61, Ala62 to Ala68, Ala69 to Ala75, Val76 to Ala82, and Ala84 to Ala90. The interval Val55–Ala90 is 5 X 7 AA tandem repeats of X-T-P-X-K-K-X. Phosphoserine is present on residues Ser116 and Ser136. Residues Ser116 to Pro142 are compositionally biased toward acidic residues. A compositionally biased stretch (low complexity) spans Ala143 to Lys168. Ser171 is modified (phosphoserine). The segment covering Ser171–Met194 has biased composition (acidic residues). Low complexity predominate over residues Thr196–Lys213. A compositionally biased stretch (acidic residues) spans Ser218–Asp246. 4 consecutive RRM domains span residues Phe281 to Ser357, Arg371 to Glu445, Lys461 to Pro535, and Lys553 to Pro628. The segment at Glu631–Glu694 is disordered. A compositionally biased stretch (gly residues) spans Gln633–Gly680. Positions Gly681 to Glu694 are enriched in basic and acidic residues.

Post-translationally, highly phosphorylated during mitosis.

It is found in the nucleus. Its subcellular location is the nucleolus. Nucleolin is the major nucleolar protein of growing eukaryotic cells. It is found associated with intranucleolar chromatin and pre-ribosomal particles. It induces chromatin decondensation by binding to histone H1. It is thought to play a role in pre-rRNA transcription and ribosome assembly. The polypeptide is Nucleolin (NCL) (Gallus gallus (Chicken)).